Reading from the N-terminus, the 171-residue chain is Co-chaperone protein HscB (171 aa).

The 73-residue stretch at 2 to 74 (DYFTLFGLPA…LTRAEYLLSL (73 aa)) folds into the J domain.

Belongs to the HscB family. In terms of assembly, interacts with HscA and stimulates its ATPase activity. Interacts with IscU.

Its function is as follows. Co-chaperone involved in the maturation of iron-sulfur cluster-containing proteins. Seems to help targeting proteins to be folded toward HscA. In Salmonella choleraesuis (strain SC-B67), this protein is Co-chaperone protein HscB.